A 435-amino-acid chain; its full sequence is Dual specificity mitogen-activated protein kinase kinase jkk-1 (435 aa).

Basic and acidic residues predominate over residues 35–49; sequence RDRRSTSVDQKHKEC. A disordered region spans residues 35–90; sequence RDRRSTSVDQKHKECSSTSSSPQHQRPNNIGYLTSPMERKFTPLSMKPSPSRRDTE. Positions 50-66 are enriched in polar residues; sequence SSTSSSPQHQRPNNIGY. A Protein kinase domain is found at 122 to 385; that stretch reads IHIISLLGSG…YRQLMKHDFY (264 aa). ATP contacts are provided by residues 128–136 and Lys149; that span reads LGSGSCGVV. Catalysis depends on Asp246, which acts as the Proton acceptor.

It belongs to the protein kinase superfamily. STE Ser/Thr protein kinase family. MAP kinase kinase subfamily. Interacts with unc-16. It depends on Mg(2+) as a cofactor. In terms of tissue distribution, expressed in most neurons, including nerve ring, head ganglions, dorsal and ventral nerve cords and tail ganglions.

It localises to the cytoplasm. Its subcellular location is the perikaryon. It is found in the cell projection. The protein resides in the axon. The enzyme catalyses L-seryl-[protein] + ATP = O-phospho-L-seryl-[protein] + ADP + H(+). The catalysed reaction is L-threonyl-[protein] + ATP = O-phospho-L-threonyl-[protein] + ADP + H(+). It carries out the reaction L-tyrosyl-[protein] + ATP = O-phospho-L-tyrosyl-[protein] + ADP + H(+). Its function is as follows. Dual specificity protein kinase which acts as an essential component of the JNK signal transduction pathway. May phosphorylate jnk-1. Plays a role in coordinating locomotion via D-type GABAergic motoneurons and in regulating synaptic vesicle transport downstream of adapter protein unc-16 and probably by activating jnk-1. Positively regulates lifespan. Upon environmental stress such as heat stress regulates daf-16 nuclear translocation probably by activating jnk-1. Regulates germline cell apoptosis in response to heavy metals such as Cu(2+) and to arsenite. This chain is Dual specificity mitogen-activated protein kinase kinase jkk-1, found in Caenorhabditis elegans.